A 330-amino-acid polypeptide reads, in one-letter code: Aspartate--ammonia ligase (330 aa).

This sequence belongs to the class-II aminoacyl-tRNA synthetase family. AsnA subfamily.

The protein localises to the cytoplasm. The enzyme catalyses L-aspartate + NH4(+) + ATP = L-asparagine + AMP + diphosphate + H(+). Its pathway is amino-acid biosynthesis; L-asparagine biosynthesis; L-asparagine from L-aspartate (ammonia route): step 1/1. This is Aspartate--ammonia ligase from Shigella boydii serotype 18 (strain CDC 3083-94 / BS512).